The chain runs to 267 residues: Glucosamine-6-phosphate deaminase (267 aa).

Asp-76 functions as the Proton acceptor; for enolization step in the catalytic mechanism. The For ring-opening step role is filled by Asp-145. Residue His-147 is the Proton acceptor; for ring-opening step of the active site. Catalysis depends on Glu-152, which acts as the For ring-opening step.

The protein belongs to the glucosamine/galactosamine-6-phosphate isomerase family. In terms of assembly, homohexamer.

It is found in the cytoplasm. It carries out the reaction alpha-D-glucosamine 6-phosphate + H2O = beta-D-fructose 6-phosphate + NH4(+). The protein operates within nucleotide-sugar biosynthesis; UDP-N-acetyl-alpha-D-glucosamine biosynthesis; alpha-D-glucosamine 6-phosphate from D-fructose 6-phosphate: step 1/1. Catalyzes the reversible conversion of alpha-D-glucosamine 6-phosphate (GlcN-6P) into beta-D-fructose 6-phosphate (Fru-6P) and ammonium ion, a regulatory reaction step in de novo uridine diphosphate-N-acetyl-alpha-D-glucosamine (UDP-GlcNAc) biosynthesis via hexosamine pathway. In Dictyostelium discoideum (Social amoeba), this protein is Glucosamine-6-phosphate deaminase.